The following is a 434-amino-acid chain: 5-methylthioadenosine/S-adenosylhomocysteine deaminase (434 aa).

Zn(2+) is bound by residues His-66 and His-68. 3 residues coordinate substrate: Glu-95, Arg-148, and His-188. Position 215 (His-215) interacts with Zn(2+). The substrate site is built by Glu-218 and Asp-304. Asp-304 contacts Zn(2+).

Belongs to the metallo-dependent hydrolases superfamily. MTA/SAH deaminase family. The cofactor is Zn(2+).

It carries out the reaction S-adenosyl-L-homocysteine + H2O + H(+) = S-inosyl-L-homocysteine + NH4(+). It catalyses the reaction S-methyl-5'-thioadenosine + H2O + H(+) = S-methyl-5'-thioinosine + NH4(+). In terms of biological role, catalyzes the deamination of 5-methylthioadenosine and S-adenosyl-L-homocysteine into 5-methylthioinosine and S-inosyl-L-homocysteine, respectively. Is also able to deaminate adenosine. The polypeptide is 5-methylthioadenosine/S-adenosylhomocysteine deaminase (Shouchella clausii (strain KSM-K16) (Alkalihalobacillus clausii)).